The primary structure comprises 284 residues: Putative ABC transporter ATP-binding protein MG468.1 homolog (284 aa).

An ABC transporter domain is found at 53-284 (VLFKGVCKAV…PKTINEINWV (232 aa)). 89 to 96 (GKSGSGKT) lines the ATP pocket.

This sequence belongs to the ABC transporter superfamily.

The polypeptide is Putative ABC transporter ATP-binding protein MG468.1 homolog (Mycoplasma pneumoniae (strain ATCC 29342 / M129 / Subtype 1) (Mycoplasmoides pneumoniae)).